The primary structure comprises 1045 residues: B3 domain-containing protein REM13 (1045 aa).

Positions 7 to 96 form a DNA-binding region, TF-B3 1; that stretch reads YPQFFHTLVP…VFHVSNLGPN (90 aa). Residues 121-147 form a disordered region; it reads NNGDVCDSEELPKEKKAKTNSEEADAV. Positions 130–141 are enriched in basic and acidic residues; it reads ELPKEKKAKTNS. 2 DNA-binding regions (TF-B3) span residues 157–253 and 305–398; these read CFMA…FCPT and FVTF…CSPE. A disordered region spans residues 423 to 449; sequence NRDKISNNDKEENMSWERKKDHLKSRD. A DNA-binding region (TF-B3 4) is located at residues 474–570; that stretch reads SNDSCLVVVS…TPVLSLCPAD (97 aa). A disordered region spans residues 606–625; sequence IKDDNSKEKNDKEESKSVDG. 3 DNA-binding regions (TF-B3) span residues 643–738, 815–910, and 940–1035; these read FVTL…LRTE, FVTF…LRTK, and FVTL…LKFS.

Its subcellular location is the nucleus. In Arabidopsis thaliana (Mouse-ear cress), this protein is B3 domain-containing protein REM13 (REM13).